An 84-amino-acid chain; its full sequence is Small ribosomal subunit protein bS20 (84 aa).

It belongs to the bacterial ribosomal protein bS20 family.

Binds directly to 16S ribosomal RNA. The polypeptide is Small ribosomal subunit protein bS20 (Limosilactobacillus fermentum (strain NBRC 3956 / LMG 18251) (Lactobacillus fermentum)).